Here is a 163-residue protein sequence, read N- to C-terminus: NADH-quinone oxidoreductase subunit I (163 aa).

4Fe-4S ferredoxin-type domains lie at 54–84 and 94–123; these read LRRY…IDSA and TRYD…ETHI. Residues Cys64, Cys67, Cys70, Cys74, Cys103, Cys106, Cys109, and Cys113 each coordinate [4Fe-4S] cluster.

The protein belongs to the complex I 23 kDa subunit family. As to quaternary structure, NDH-1 is composed of 14 different subunits. Subunits NuoA, H, J, K, L, M, N constitute the membrane sector of the complex. Requires [4Fe-4S] cluster as cofactor.

It localises to the cell inner membrane. It carries out the reaction a quinone + NADH + 5 H(+)(in) = a quinol + NAD(+) + 4 H(+)(out). Its function is as follows. NDH-1 shuttles electrons from NADH, via FMN and iron-sulfur (Fe-S) centers, to quinones in the respiratory chain. The immediate electron acceptor for the enzyme in this species is believed to be ubiquinone. Couples the redox reaction to proton translocation (for every two electrons transferred, four hydrogen ions are translocated across the cytoplasmic membrane), and thus conserves the redox energy in a proton gradient. This chain is NADH-quinone oxidoreductase subunit I, found in Xylella fastidiosa (strain 9a5c).